Consider the following 329-residue polypeptide: Quinolinate synthase (329 aa).

Positions 44 and 61 each coordinate iminosuccinate. Residue Cys106 participates in [4Fe-4S] cluster binding. Residues 132 to 134 (YIN) and Ser149 contribute to the iminosuccinate site. [4Fe-4S] cluster is bound at residue Cys192. Iminosuccinate-binding positions include 218 to 220 (HPE) and Thr235. Cys285 contacts [4Fe-4S] cluster.

The protein belongs to the quinolinate synthase family. Type 2 subfamily. [4Fe-4S] cluster serves as cofactor.

Its subcellular location is the plastid. The protein localises to the cyanelle. The enzyme catalyses iminosuccinate + dihydroxyacetone phosphate = quinolinate + phosphate + 2 H2O + H(+). Its pathway is cofactor biosynthesis; NAD(+) biosynthesis; quinolinate from iminoaspartate: step 1/1. In terms of biological role, catalyzes the condensation of iminoaspartate with dihydroxyacetone phosphate to form quinolinate. The polypeptide is Quinolinate synthase (Cyanophora paradoxa).